The sequence spans 142 residues: Ribosome-binding factor A (142 aa).

The disordered stretch occupies residues 120–142; that stretch reads TLGEVQSESDQPTTYETTTVNKT. A compositionally biased stretch (polar residues) spans 123-142; it reads EVQSESDQPTTYETTTVNKT.

This sequence belongs to the RbfA family. In terms of assembly, monomer. Binds 30S ribosomal subunits, but not 50S ribosomal subunits or 70S ribosomes.

Its subcellular location is the cytoplasm. In terms of biological role, one of several proteins that assist in the late maturation steps of the functional core of the 30S ribosomal subunit. Associates with free 30S ribosomal subunits (but not with 30S subunits that are part of 70S ribosomes or polysomes). Required for efficient processing of 16S rRNA. May interact with the 5'-terminal helix region of 16S rRNA. This is Ribosome-binding factor A from Prochlorococcus marinus (strain MIT 9313).